A 305-amino-acid polypeptide reads, in one-letter code: UDP-3-O-acyl-N-acetylglucosamine deacetylase (305 aa).

His-78, His-237, and Asp-241 together coordinate Zn(2+). His-264 (proton donor) is an active-site residue.

Belongs to the LpxC family. Requires Zn(2+) as cofactor.

The catalysed reaction is a UDP-3-O-[(3R)-3-hydroxyacyl]-N-acetyl-alpha-D-glucosamine + H2O = a UDP-3-O-[(3R)-3-hydroxyacyl]-alpha-D-glucosamine + acetate. Its pathway is glycolipid biosynthesis; lipid IV(A) biosynthesis; lipid IV(A) from (3R)-3-hydroxytetradecanoyl-[acyl-carrier-protein] and UDP-N-acetyl-alpha-D-glucosamine: step 2/6. Catalyzes the hydrolysis of UDP-3-O-myristoyl-N-acetylglucosamine to form UDP-3-O-myristoylglucosamine and acetate, the committed step in lipid A biosynthesis. The chain is UDP-3-O-acyl-N-acetylglucosamine deacetylase from Cupriavidus necator (strain ATCC 17699 / DSM 428 / KCTC 22496 / NCIMB 10442 / H16 / Stanier 337) (Ralstonia eutropha).